A 323-amino-acid polypeptide reads, in one-letter code: tRNA U34 carboxymethyltransferase (323 aa).

Residues Lys91, Trp105, Lys110, Gly130, 180–181 (VE), Met196, Tyr200, and Arg315 contribute to the carboxy-S-adenosyl-L-methionine site.

The protein belongs to the class I-like SAM-binding methyltransferase superfamily. CmoB family. As to quaternary structure, homotetramer.

It carries out the reaction carboxy-S-adenosyl-L-methionine + 5-hydroxyuridine(34) in tRNA = 5-carboxymethoxyuridine(34) in tRNA + S-adenosyl-L-homocysteine + H(+). Its function is as follows. Catalyzes carboxymethyl transfer from carboxy-S-adenosyl-L-methionine (Cx-SAM) to 5-hydroxyuridine (ho5U) to form 5-carboxymethoxyuridine (cmo5U) at position 34 in tRNAs. The sequence is that of tRNA U34 carboxymethyltransferase from Trichlorobacter lovleyi (strain ATCC BAA-1151 / DSM 17278 / SZ) (Geobacter lovleyi).